Reading from the N-terminus, the 201-residue chain is Peptidyl-prolyl cis-trans isomerase FKBP11 (201 aa).

A signal peptide spans 1–27 (MTLRPSLLPLHLLLLLLLSAAVCRAEA). The PPIase FKBP-type domain occupies 57–144 (GDTLHIHYTG…QYDVELIALI (88 aa)). A helical transmembrane segment spans residues 156–176 (ILPLVGMAMVPALLGLIGYHL).

It belongs to the FKBP-type PPIase family. Interacts with IFITM5.

Its subcellular location is the membrane. It catalyses the reaction [protein]-peptidylproline (omega=180) = [protein]-peptidylproline (omega=0). In terms of biological role, PPIases accelerate the folding of proteins during protein synthesis. This Homo sapiens (Human) protein is Peptidyl-prolyl cis-trans isomerase FKBP11 (FKBP11).